The sequence spans 921 residues: TRPM8 channel-associated factor 1 (921 aa).

The Peptidase M60 domain occupies 542–841 (YCWMSTGLYI…TYLQLQEAFG (300 aa)).

Belongs to the TCAF family. Interacts with TRPM8 (via N-terminus and C-terminus domains); the interaction inhibits TRPM8 channel activity. Interacts with TRPV6.

Its subcellular location is the cell membrane. Its function is as follows. Positively regulates the plasma membrane cation channel TRPM8 activity. Involved in the recruitment of TRPM8 to the cell surface. Promotes prostate cancer cell migration inhibition in a TRPM8-dependent manner. This is TRPM8 channel-associated factor 1 from Pongo abelii (Sumatran orangutan).